The sequence spans 1169 residues: Rabankyrin-5 (1169 aa).

At Ala2 the chain carries N-acetylalanine. One can recognise a BTB domain in the interval 68–130 (SDLKIKVGDR…IYTDELEFRE (63 aa)). 5 ANK repeats span residues 217 to 247 (KTEYPLHKAIKVEREDVVFLYLIEMDSQLPG), 255 to 284 (NGDLALDLALSRRLESIATTLVSHKADVDM), 288 to 317 (SGWSLLHKGIQRGDLFAATFLIKNGAFVNA), 322 to 362 (AQET…NPNM), and 366 to 396 (KGRTPLHVSIMAGNEYVFSQLLQCKQLDLEL). A Phosphoserine modification is found at Ser270. Residues 421-423 (NPF) carry the NPF motif. 16 ANK repeats span residues 490–519 (WGETPLHTACRHGLANLTAELLQQGANPNL), 542–572 (HLQTPLHMAIAYNHPDVVSVILEQKANALHA), 588–617 (RDQTVLGLALWTGMHTIAAQLLGSGAAIND), 621–650 (DGQTLLHMAIQRQDSKSALFLLEHQADINV), 654–683 (DGETALQLAIRNQLPLVVDAICTRGADMSV), 687–716 (KGNPPLWLALANNLEDIASTLVRHGCDATC), 724–753 (CLQTLLHRAIDENNEPTACFLIRSGCDVNS), 769–798 (DGQTPLHLAASWGLEETVQCLLEFGANVNA), 802–832 (EGRTPIHVAISSQHGVIIQLLVSHPDIHLNV), 836–865 (QGLTPFACAMTFKNNKSAEAILKRESGAAE), 870–899 (KGRNFLHVAVQNSDIESVLFLISVHANVNS), 905–934 (SKLTPLHLAVQAGSEIIVRNLLLAGAKVNE), 938–967 (HRQTALHLAAQQDLPTICSVLLENGVDFAA), 971–1001 (NGNNALHLAVMHGRLNNIRVLLTECTVDAEA), 1005–1037 (RGQSPLHILGQYGKENAAAIFDLFLECMPGYPL), and 1043–1072 (DGSTVLLLAYMKGNANLCRAIVRSGARLGV). Positions 650-759 (VRTQDGETAL…DVNSPRQPGA (110 aa)) are interaction with RHOD and RAB5A. The segment at 1104-1164 (WCDGSYCYEC…VCNICFDVLT (61 aa)) adopts an FYVE-type zinc-finger fold. Residues Cys1110, Cys1113, Cys1126, Cys1129, Cys1134, Cys1137, Cys1156, and Cys1159 each coordinate Zn(2+).

In terms of assembly, interacts with RAB5A (in GTP-bound form). Interacts with RHOD (independent of GTP-loaded status). Interacts with EHD1. Interacts with VPS26A; the interaction is independent of EHD1 and is indicative for an association with the cargo recognition subcomplex of the retromer complex. As to expression, high expression in whole adult brain and intermediate expression in all other tissues and specific brain regions examined, including fetal brain.

The protein localises to the cytoplasm. It localises to the endosome membrane. The protein resides in the early endosome. Proposed effector of Rab5. Binds to phosphatidylinositol 3-phosphate (PI(3)P). Involved in homotypic early endosome fusion and to a lesser extent in heterotypic fusion of chlathrin-coated vesicles with early endosomes. Involved in macropinocytosis; the function is dependent on Rab5-GTP. Required for correct endosomal localization. Involved in the internalization and trafficking of activated tyrosine kinase receptors such as PDGFRB. Regulates the subcellular localization of the retromer complex in a EHD1-dependent manner. Involved in endosome-to-Golgi transport and biosynthetic transport to late endosomes and lysosomes indicative for a regulation of retromer complex-mediated retrograde transport. This is Rabankyrin-5 (ANKFY1) from Homo sapiens (Human).